Here is a 248-residue protein sequence, read N- to C-terminus: Exosome complex component Rrp41 (248 aa).

This sequence belongs to the RNase PH family. Rrp41 subfamily. Component of the archaeal exosome complex. Forms a hexameric ring-like arrangement composed of 3 Rrp41-Rrp42 heterodimers. The hexameric ring associates with a trimer of Rrp4 and/or Csl4 subunits.

Its subcellular location is the cytoplasm. In terms of biological role, catalytic component of the exosome, which is a complex involved in RNA degradation. Has 3'-&gt;5' exoribonuclease activity. Can also synthesize heteromeric RNA-tails. Binds RNA. The protein is Exosome complex component Rrp41 of Saccharolobus solfataricus (strain ATCC 35092 / DSM 1617 / JCM 11322 / P2) (Sulfolobus solfataricus).